Reading from the N-terminus, the 504-residue chain is Maturase K (504 aa).

This sequence belongs to the intron maturase 2 family. MatK subfamily.

It localises to the plastid. The protein resides in the chloroplast. Its function is as follows. Usually encoded in the trnK tRNA gene intron. Probably assists in splicing its own and other chloroplast group II introns. The chain is Maturase K from Draba nemorosa (Woodland whitlowgrass).